Reading from the N-terminus, the 414-residue chain is MNYKAPRGTHDIFGINASGMSWLEQKAKVIFKRHGFEEVRTPVFEDAALFMRSIGQTTDIVEKEMYIFEDRKKRKLALRPEGTASLVRAFIEHRMDVSMPAGRFFYMGEMFRYERPQAGRYRQFHQIGAEFFGSSSPAADAEIIILAQHLLSSVGINEMNIYINSLGCEKCRPFFRETLVKYLGSVRDLCEDCLRRLEKNPLRILDCKTDSNKFTAVPRMSDYLCNCCKDNFSLTQSLLKSVGYNYTVDERLVRGLDYYTKTVFEIRSDAVGSQCALAAGGRYDNLVGELGGQDTPAVGFALGSERVLLAVQKTGFFGSFQESEKIFIAVADQELFSEAFSFAVKAMRNGLKGNKNISVFGPINGKSLTSQLKFADKIKAVKTIVFARTEFEYGKFLMKNMKDKTQTEFLISEF.

This sequence belongs to the class-II aminoacyl-tRNA synthetase family. As to quaternary structure, homodimer.

It is found in the cytoplasm. The catalysed reaction is tRNA(His) + L-histidine + ATP = L-histidyl-tRNA(His) + AMP + diphosphate + H(+). The chain is Histidine--tRNA ligase from Endomicrobium trichonymphae.